Here is a 418-residue protein sequence, read N- to C-terminus: UDP-N-acetylglucosamine 1-carboxyvinyltransferase (418 aa).

22–23 (KN) provides a ligand contact to phosphoenolpyruvate. Position 92 (R92) interacts with UDP-N-acetyl-alpha-D-glucosamine. The active-site Proton donor is the C116. C116 carries the 2-(S-cysteinyl)pyruvic acid O-phosphothioketal modification. Residues 121–125 (RPIDL), D305, and L327 contribute to the UDP-N-acetyl-alpha-D-glucosamine site.

It belongs to the EPSP synthase family. MurA subfamily.

It localises to the cytoplasm. It carries out the reaction phosphoenolpyruvate + UDP-N-acetyl-alpha-D-glucosamine = UDP-N-acetyl-3-O-(1-carboxyvinyl)-alpha-D-glucosamine + phosphate. It functions in the pathway cell wall biogenesis; peptidoglycan biosynthesis. Its function is as follows. Cell wall formation. Adds enolpyruvyl to UDP-N-acetylglucosamine. In Campylobacter jejuni subsp. doylei (strain ATCC BAA-1458 / RM4099 / 269.97), this protein is UDP-N-acetylglucosamine 1-carboxyvinyltransferase.